Here is a 469-residue protein sequence, read N- to C-terminus: Phosphatidylcholine:ceramide cholinephosphotransferase 1 (469 aa).

The disordered stretch occupies residues T40–R177. Composition is skewed to basic and acidic residues over residues A72–T91, S100–K117, and V162–R177. A run of 6 helical transmembrane segments spans residues L186–I206, L231–F251, L262–V282, T300–F320, L327–I347, and F355–L375. H336 is a catalytic residue. Topologically, residues S376–E469 are cytoplasmic. Residues H379 and D383 contribute to the active site.

The protein belongs to the sphingomyelin synthase family.

It is found in the golgi apparatus membrane. The enzyme catalyses an N-acylsphing-4-enine + a 1,2-diacyl-sn-glycero-3-phosphocholine = a sphingomyelin + a 1,2-diacyl-sn-glycerol. It carries out the reaction an N-acyl-15-methylhexadecasphing-4-enine + a 1,2-diacyl-sn-glycero-3-phosphocholine = an N-acyl-15-methylhexadecasphing-4-enine-1-phosphocholine + a 1,2-diacyl-sn-glycerol. It functions in the pathway lipid metabolism; sphingolipid metabolism. Sphingomyelin synthases (SM synthase or SMS) synthesize the sphingolipid sphingomyelin (SM) through transfer of the phosphatidyl head group of 1,2-diacyl-sn-glycero-3-phosphocholine (phosphatidylcholine, PC) on to the primary hydroxyl of ceramide (N-acylsphingoid base), yielding 1,2-diacyl-sn-glycerol (diacylglycerol, DAG) as a side product. Functions as a bidirectional lipid cholinephosphotransferases capable of converting PC and ceramide to SM and DAG and vice versa depending on the respective levels of ceramide and DAG as phosphocholine acceptors, respectively. This is Phosphatidylcholine:ceramide cholinephosphotransferase 1 (sms-1) from Caenorhabditis elegans.